The sequence spans 186 residues: Tumor necrosis factor, alpha-induced protein 8-like protein 2 A (186 aa).

The protein belongs to the TNFAIP8 family. TNFAIP8L2 subfamily.

Acts as a negative regulator of innate and adaptive immunity by maintaining immune homeostasis. Negative regulator of Toll-like receptor and T-cell receptor function. Prevents hyperresponsiveness of the immune system and maintains immune homeostasis. Inhibits jun/ap1 and NF-kappa-B activation. Promotes Fas-induced apoptosis. This is Tumor necrosis factor, alpha-induced protein 8-like protein 2 A (tnfaip8l2a) from Danio rerio (Zebrafish).